Reading from the N-terminus, the 289-residue chain is MSNESNDLEKNISHLDPTGVDNAYIPPEQPETKHSRFNIDRDTLRNHFIAAVGEFCGTFMFLWCAYVICNVANHDVALTTEPEGSHPGQLIMIALGFGFSVMFSIWCFAGVSGGALNPAVSLSLCLARAISPARCVVMWFPQIIAGMAAGGAASAMTPGKVLFTNALGLGCSRSRGLFLEMFGTAVLCLTVLMTAVEKRETNFMAALPIGISLFMAHMALTGYTGTGVNPARSLGAAVAARYFPHYHWIYWIGPLLGAFLAWSVWQLLQILDYTTYVNAEKAAGQKKED.

The disordered stretch occupies residues 1-36; the sequence is MSNESNDLEKNISHLDPTGVDNAYIPPEQPETKHSR. The Cytoplasmic portion of the chain corresponds to 1-47; the sequence is MSNESNDLEKNISHLDPTGVDNAYIPPEQPETKHSRFNIDRDTLRNH. A helical membrane pass occupies residues 48–68; sequence FIAAVGEFCGTFMFLWCAYVI. Topologically, residues 69–90 are extracellular; it reads CNVANHDVALTTEPEGSHPGQL. The helical transmembrane segment at 91 to 111 threads the bilayer; that stretch reads IMIALGFGFSVMFSIWCFAGV. Residues 112–135 are Cytoplasmic-facing; that stretch reads SGGALNPAVSLSLCLARAISPARC. Positions 117-119 match the NPA 1 motif; it reads NPA. The helical transmembrane segment at 136–156 threads the bilayer; it reads VVMWFPQIIAGMAAGGAASAM. Residues 157–175 are Extracellular-facing; it reads TPGKVLFTNALGLGCSRSR. The chain crosses the membrane as a helical span at residues 176-196; the sequence is GLFLEMFGTAVLCLTVLMTAV. At 197-202 the chain is on the cytoplasmic side; that stretch reads EKRETN. A helical membrane pass occupies residues 203-223; that stretch reads FMAALPIGISLFMAHMALTGY. The Extracellular segment spans residues 224–247; it reads TGTGVNPARSLGAAVAARYFPHYH. Positions 229-231 match the NPA 2 motif; it reads NPA. The helical transmembrane segment at 248–268 threads the bilayer; sequence WIYWIGPLLGAFLAWSVWQLL. Over 269–289 the chain is Cytoplasmic; that stretch reads QILDYTTYVNAEKAAGQKKED.

Belongs to the MIP/aquaporin (TC 1.A.8) family.

Its subcellular location is the endoplasmic reticulum membrane. It localises to the cell membrane. Water channel required to facilitate the transport of water across membranes. Involved in freeze tolerance, osmotolerance and cell flocculation in liquid cultures. Is non-functional in most laboratory strains. In Saccharomyces cerevisiae (Baker's yeast), this protein is Aquaporin-2 (AQY2).